The primary structure comprises 527 residues: Protein SDS24 (527 aa).

Composition is skewed to low complexity over residues 1 to 22 and 55 to 74; these read MAST…LPTS and TPPT…TPAP. The interval 1–75 is disordered; that stretch reads MASTSNTFPP…PGCAATPAPL (75 aa). Position 94 is a phosphoserine (Ser-94). CBS domains follow at residues 114-175, 198-256, 283-342, and 443-512; these read IEQN…KITV, LTPK…NARS, TSRQ…QYPL, and LNSH…GNKE. Residues 424 to 447 show a composition bias toward low complexity; sequence AQSSANGATPMSKSSSSTSLNSHS. Disordered stretches follow at residues 424 to 478 and 508 to 527; these read AQSS…TNTP and TGNK…SIAM. Residues Ser-458 and Ser-524 each carry the phosphoserine modification.

The protein belongs to the SDS23 family.

It is found in the cytoplasm. Its subcellular location is the nucleus. In terms of biological role, involved in DNA replication and cell separation during budding. This is Protein SDS24 (SDS24) from Saccharomyces cerevisiae (strain YJM789) (Baker's yeast).